A 620-amino-acid chain; its full sequence is Endoglucanase 10 (620 aa).

The interval 1 to 26 is disordered; the sequence is MFGRDPWGGPLEISNADSATDDDRSR. A helical; Signal-anchor for type II membrane protein membrane pass occupies residues 72 to 92; it reads IFMWTVGTILGVGLFIGFVMM. D165 acts as the Nucleophile in catalysis. N216, N314, N323, N344, N408, and N425 each carry an N-linked (GlcNAc...) asparagine glycan. Residues H513 and D561 contribute to the active site. Residue N567 is glycosylated (N-linked (GlcNAc...) asparagine). E570 is a catalytic residue.

It belongs to the glycosyl hydrolase 9 (cellulase E) family. Ubiquitous.

It is found in the membrane. It carries out the reaction Endohydrolysis of (1-&gt;4)-beta-D-glucosidic linkages in cellulose, lichenin and cereal beta-D-glucans.. The protein is Endoglucanase 10 (GLU2) of Oryza sativa subsp. japonica (Rice).